A 202-amino-acid polypeptide reads, in one-letter code: Snake venom metalloproteinase atroxlysin-1 (202 aa).

The 197-residue stretch at 6-202 (RYVDLFIVVD…ENPQCILNKR (197 aa)) folds into the Peptidase M12B domain. The Ca(2+) site is built by D9 and D93. 3 cysteine pairs are disulfide-bonded: C117/C197, C157/C181, and C159/C164. Residue H142 coordinates Zn(2+). E143 is a catalytic residue. Zn(2+) contacts are provided by H146 and H152. Positions 197 and 200 each coordinate Ca(2+).

Belongs to the venom metalloproteinase (M12B) family. P-I subfamily. In terms of assembly, monomer. Zn(2+) is required as a cofactor. Expressed by the venom gland.

The protein localises to the secreted. Inhibited by EDTA, DTT and high concentrations of zinc ions (&gt;2 mM). Weakly inhibited by TLCK. Not inhibited by PMSF. Activated by calcium ions. Its function is as follows. Snake venom zinc metalloproteinase that acts on fibrinogen, fibrin, fibronectin (FN1), type I collagen, type IV collagen, integrin alpha-7/beta-1 (ITGA7/ITGB1) and integrin alpha-1/beta-1 (ITGA1/ITGB1). Binds to fibronectin (FN1), fibrinogen and, weakly, to type I collagen and laminin. Cleaves Xaa-Leu bonds. Inhibits ADP- and collagen-induced platelet aggregation both in the presence (IC(50)=1.4 uM for collagen) and in the absence (IC(50)=2.2 uM for collagen) of cofactors. Has hemorrhagic activity. This chain is Snake venom metalloproteinase atroxlysin-1, found in Bothrops atrox (Barba amarilla).